The primary structure comprises 112 residues: ATP synthase epsilon chain (112 aa).

It belongs to the ATPase epsilon chain family. F-type ATPases have 2 components, CF(1) - the catalytic core - and CF(0) - the membrane proton channel. CF(1) has five subunits: alpha(3), beta(3), gamma(1), delta(1), epsilon(1). CF(0) has three main subunits: a, b and c.

It is found in the cell inner membrane. Its function is as follows. Produces ATP from ADP in the presence of a proton gradient across the membrane. The protein is ATP synthase epsilon chain of Rickettsia felis (strain ATCC VR-1525 / URRWXCal2) (Rickettsia azadi).